Consider the following 170-residue polypeptide: NADH-dependent flavin reductase StyB (170 aa).

It belongs to the non-flavoprotein flavin reductase family. As to quaternary structure, homodimer.

The enzyme catalyses a reduced flavin + NAD(+) = an oxidized flavin + NADH + 2 H(+). Its pathway is aromatic compound metabolism. Its function is as follows. Reductase component of a two-component system that catalyzes the first step in the aerobic styrene degradation pathway by enantioselective epoxidation of the vinyl side chain. Utilizes NADH to reduce FAD, which is then transferred to the styrene monooxygenase StyA. The protein is NADH-dependent flavin reductase StyB (styB) of Pseudomonas fluorescens.